We begin with the raw amino-acid sequence, 490 residues long: Aspartyl/glutamyl-tRNA(Asn/Gln) amidotransferase subunit B (490 aa).

The protein belongs to the GatB/GatE family. GatB subfamily. Heterotrimer of A, B and C subunits.

The enzyme catalyses L-glutamyl-tRNA(Gln) + L-glutamine + ATP + H2O = L-glutaminyl-tRNA(Gln) + L-glutamate + ADP + phosphate + H(+). It catalyses the reaction L-aspartyl-tRNA(Asn) + L-glutamine + ATP + H2O = L-asparaginyl-tRNA(Asn) + L-glutamate + ADP + phosphate + 2 H(+). In terms of biological role, allows the formation of correctly charged Asn-tRNA(Asn) or Gln-tRNA(Gln) through the transamidation of misacylated Asp-tRNA(Asn) or Glu-tRNA(Gln) in organisms which lack either or both of asparaginyl-tRNA or glutaminyl-tRNA synthetases. The reaction takes place in the presence of glutamine and ATP through an activated phospho-Asp-tRNA(Asn) or phospho-Glu-tRNA(Gln). The sequence is that of Aspartyl/glutamyl-tRNA(Asn/Gln) amidotransferase subunit B from Prochlorococcus marinus (strain AS9601).